The chain runs to 521 residues: Phospholipase C B (521 aa).

Residues 1–39 (MGSEHPVDGMTRRQFFAKAAAATTAGAFMSLAGPIIEKA) constitute a signal peptide (tat-type signal). The interval 501-521 (FPQSMPTQETAPTRGIPSGLC) is disordered.

This sequence belongs to the bacterial phospholipase C family. Predicted to be exported by the Tat system. The position of the signal peptide cleavage has not been experimentally proven.

It localises to the secreted. The protein localises to the cell wall. The catalysed reaction is a 1,2-diacyl-sn-glycero-3-phosphocholine + H2O = phosphocholine + a 1,2-diacyl-sn-glycerol + H(+). Involved in virulence. Induces cytotoxic effects on mouse macrophage cell lines, via direct or indirect enzymatic hydrolysis of cell membrane phospholipids. Hydrolyzes phosphatidylcholine. This chain is Phospholipase C B, found in Mycobacterium tuberculosis (strain CDC 1551 / Oshkosh).